We begin with the raw amino-acid sequence, 130 residues long: Follitropin subunit beta (130 aa).

Positions 1–20 (MMKSIQLCILLWCLRAVCCH) are cleaved as a signal peptide. 6 cysteine pairs are disulfide-bonded: C22/C70, C36/C85, C39/C123, C47/C101, C51/C103, and C106/C113. N-linked (GlcNAc...) asparagine glycans are attached at residues N26 and N43.

It belongs to the glycoprotein hormones subunit beta family. Heterodimer. The active follitropin is a heterodimer composed of an alpha chain/CGA shared with other hormones and a unique beta chain/FSHB shown here.

It is found in the secreted. In terms of biological role, together with the alpha chain CGA constitutes follitropin, the follicle-stimulating hormone, and provides its biological specificity to the hormone heterodimer. Binds FSHR, a G protein-coupled receptor, on target cells to activate downstream signaling pathways. Follitropin is involved in follicle development and spermatogenesis in reproductive organs. This chain is Follitropin subunit beta (Fshb), found in Rattus norvegicus (Rat).